The following is a 293-amino-acid chain: Peptidoglycan deacetylase (293 aa).

Zn(2+)-binding residues include Asp-14, His-86, and His-90. The region spanning 29–276 (PDDISRGLFA…INKHEGVRWV (248 aa)) is the NodB homology domain.

The protein belongs to the polysaccharide deacetylase family. As to quaternary structure, homotetramer.

It catalyses the reaction Deacetylation of xylans and xylo-oligosaccharides.. In terms of biological role, catalyzes the N-deacetylation of peptidoglycan (PG), an important mechanism that appears to confer lysozyme resistance and to mitigate host immune detection; this likely contributes to pathogen persistence in the host. The exact nature of the residue in PG that is deacetylated has not been determined. Is also able to catalyze the deacetylation of acetylated xylan, and, to a lesser extent, that of chitin and chitosan. Therefore, this enzyme might play a role during infection, considering that xylan-containing carbohydrate structures are among those commonly consumed by humans. In Helicobacter pylori (strain ATCC 700392 / 26695) (Campylobacter pylori), this protein is Peptidoglycan deacetylase (pgdA).